The chain runs to 1578 residues: FH1/FH2 domain-containing protein 3 (1578 aa).

Positions 18–405 constitute a GBD/FH3 domain; sequence NSTNFPEPSR…DLCEKDEEEE (388 aa). Disordered stretches follow at residues 324–518, 535–824, 915–942, 979–1013, 1418–1462, 1490–1514, and 1528–1565; these read HEDG…DKLP, SPLL…GVNG, VGRG…KTES, LGHR…VPPP, QQKQ…YAED, RTRS…PSVT, and SATQ…PEEA. A phosphoserine mark is found at Ser345 and Ser376. The span at 368–383 shows a compositional bias: polar residues; the sequence is IQNIKSPLSAPTSPCS. Residues 399–425 are compositionally biased toward acidic residues; sequence EKDEEEEEEEEQPITEPNSEEEREDDA. Thr413 carries the post-translational modification Phosphothreonine. A compositionally biased stretch (low complexity) spans 434–446; the sequence is ASSASGQSSPGKD. The segment covering 453–473 has biased composition (polar residues); it reads ALHTTSSPTSQGRWLSASTAA. The span at 553-583 shows a compositional bias: low complexity; it reads SNFSSNSFQSSRPSPGPSGSPSYASSFSSPQ. A compositionally biased stretch (polar residues) spans 584 to 598; sequence DTRSSPSGLLTSSFR. Residues 597-645 adopt a coiled-coil conformation; sequence FRQHQESLAAERERRRQEREERLQRIEREERNKFNREYLDKREEQRQAR. Positions 599 to 651 are enriched in basic and acidic residues; it reads QHQESLAAERERRRQEREERLQRIEREERNKFNREYLDKREEQRQARGERYKY. Composition is skewed to low complexity over residues 675–684 and 692–701; these read DLSLDLSLPA and SSQSPSADSQ. Positions 751-761 are enriched in acidic residues; the sequence is SQEEPVLELEP. The segment covering 762–782 has biased composition (basic and acidic residues); sequence EERASLSEKERQNEEVNERDN. Over residues 784–793 the composition is skewed to low complexity; that stretch reads SASSISSSSS. A compositionally biased stretch (basic and acidic residues) spans 795-809; sequence LEREEKEDKLSEDRA. Ser921 carries the phosphoserine modification. Position 933 is a phosphothreonine (Thr933). Residues 985-1013 are compositionally biased toward pro residues; it reads PGPPPPPPPTFLGLPPPPPPPLLDSVPPP. One can recognise an FH1 domain in the interval 985–1016; it reads PGPPPPPPPTFLGLPPPPPPPLLDSVPPPPVP. The 397-residue stretch at 1039-1435 folds into the FH2 domain; sequence GQPAFTKKKK…HRERNKTRGK (397 aa). Residues 1420–1434 show a composition bias toward basic residues; sequence KQKRANHRERNKTRG. The segment covering 1444–1456 has biased composition (low complexity); the sequence is SGSSPAAPSQPQG. Residues 1515 to 1547 form the DAD domain; sequence DDAADEIMDRIVKSATQVPSQRVVPRERKRSRA. Residues 1541 to 1556 are compositionally biased toward basic residues; that stretch reads ERKRSRANRKSLRRTL.

The protein belongs to the formin homology family. In terms of assembly, interacts with nestin/NES-based interfilament (IF). Interacts with SQSTM1. In terms of tissue distribution, expressed in the heart, including left ventricle, kidney, brain and skeletal muscle, including soleus and tibialis anterior (at protein level).

Its subcellular location is the cytoplasm. The protein resides in the cytoskeleton. The protein localises to the myofibril. It localises to the sarcomere. It is found in the z line. May play a role in actin filament polymerization in cardiomyocytes. Actin-organizing protein that may cause stress fiber formation together with cell elongation. The polypeptide is FH1/FH2 domain-containing protein 3 (Fhod3) (Mus musculus (Mouse)).